Here is a 345-residue protein sequence, read N- to C-terminus: MTQANTNNAYGKDIAMTVIGAGSYGTSLAISLARNGANVVLWGHEPEHMARLEADRANHAFLPGVDFPESLIIESDLEKAVQASRDLLVVVPSHVFGIVLNSCKPFLREDSRICWATKGLEPETGRLLKDVAYDIIGENYSLAVLSGPTFAKELAMGLPTAISVASPDAEFVADLQEKIHCSKTFRVYANNDFIGMQLGGAVKNVIAIGAGMSDGIGFGANARTALITRGLAEMSRLGAALGAKPETFMGMAGLGDLVLTCTDNQSRNRRFGLALGQGQDVDTAQEEIGQVVEGYRNTKEVWMLSQRMGVEMPIVDQIYQVLYQGKDARLAAQDLLARDKKAEGK.

Residues Ser23, Tyr24, His44, and Lys118 each coordinate NADPH. Sn-glycerol 3-phosphate contacts are provided by Lys118, Gly147, and Thr149. Ala151 contributes to the NADPH binding site. Sn-glycerol 3-phosphate-binding residues include Lys203, Asp256, Ser266, Arg267, and Asn268. Lys203 functions as the Proton acceptor in the catalytic mechanism. Arg267 is a binding site for NADPH. NADPH is bound by residues Val291 and Glu293.

The protein belongs to the NAD-dependent glycerol-3-phosphate dehydrogenase family.

Its subcellular location is the cytoplasm. It carries out the reaction sn-glycerol 3-phosphate + NAD(+) = dihydroxyacetone phosphate + NADH + H(+). The catalysed reaction is sn-glycerol 3-phosphate + NADP(+) = dihydroxyacetone phosphate + NADPH + H(+). It participates in membrane lipid metabolism; glycerophospholipid metabolism. Its function is as follows. Catalyzes the reduction of the glycolytic intermediate dihydroxyacetone phosphate (DHAP) to sn-glycerol 3-phosphate (G3P), the key precursor for phospholipid synthesis. This Vibrio parahaemolyticus serotype O3:K6 (strain RIMD 2210633) protein is Glycerol-3-phosphate dehydrogenase [NAD(P)+].